The following is a 192-amino-acid chain: UPF0312 protein PputGB1_5030 (192 aa).

Positions 1-23 (MLKKTFAALALGTALLSAGQAMA) are cleaved as a signal peptide.

The protein belongs to the UPF0312 family. Type 1 subfamily.

It is found in the periplasm. The protein is UPF0312 protein PputGB1_5030 of Pseudomonas putida (strain GB-1).